A 322-amino-acid chain; its full sequence is Cysteine protease yopT1 (322 aa).

The interval 42–69 is disordered; it reads LSHSNRQKKLSATIKHNQSSRSMLDRKL. Catalysis depends on residues Cys-139, His-258, and Asp-274.

It belongs to the peptidase C58 family. Interacts with human ARHA.

Its subcellular location is the secreted. Cysteine protease, which is translocated into infected cells and plays a central role in pathogenesis by cleaving the C-terminus end of the human small GTPase RhoA/ARHA, a regulator of cytoskeleton. Once cleaved, ARHA loses its lipid modification, and is released from the cell membrane, leading to the subsequent disruption of actin cytoskeleton of the host cell. In Yersinia enterocolitica serotype O:8 / biotype 1B (strain NCTC 13174 / 8081), this protein is Cysteine protease yopT1 (yopT1).